The primary structure comprises 63 residues: Large ribosomal subunit protein uL29 (63 aa).

Belongs to the universal ribosomal protein uL29 family.

The sequence is that of Large ribosomal subunit protein uL29 from Pseudomonas aeruginosa (strain UCBPP-PA14).